The sequence spans 311 residues: MTENNRLSVKLPGLDLKNPIIPASGCFGFGEEYAKYYDLNKLGSIMVKATTLHPRFGNPTPRVAETASGMLNAIGLQNPGLEVIMTEKLPWLNENFPELPIIANVAGSEEADYVAVCAKIGDAANVKAIELNISCPNVKHGGQAFGTDPEVAAALVKACKAVSKVPLYVKLSPNVTDIVPIAKAVEAAGADGLTMINTLMGVRFDLKTRQPILANITGGLSGPAIKPVALKLIHQVAQVVDIPIIGMGGVANAQDVLEMYMAGASAVAVGTANFADPFVCPKIIDKLPELMDQYRIESLESLIQEVKEGKK.

FMN-binding positions include S24 and 48–49 (KA). Substrate-binding positions include K48 and 72–76 (NAIGL). Positions 104 and 132 each coordinate FMN. N132 contacts substrate. C135 serves as the catalytic Nucleophile. The FMN site is built by K170 and I196. 197 to 198 (NT) is a substrate binding site. Residues G222, 248–249 (GG), and 270–271 (GT) contribute to the FMN site.

Belongs to the dihydroorotate dehydrogenase family. Type 1 subfamily. In terms of assembly, heterotetramer of 2 PyrK and 2 PyrD type B subunits. FMN serves as cofactor.

It is found in the cytoplasm. It carries out the reaction (S)-dihydroorotate + NAD(+) = orotate + NADH + H(+). It participates in pyrimidine metabolism; UMP biosynthesis via de novo pathway; orotate from (S)-dihydroorotate (NAD(+) route): step 1/1. In terms of biological role, catalyzes the conversion of dihydroorotate to orotate with NAD(+) as electron acceptor. Cannot use fumarate as an electron acceptor. The sequence is that of Dihydroorotate dehydrogenase B (NAD(+)), catalytic subunit (pyrDB) from Lactococcus lactis subsp. cremoris (strain MG1363).